The chain runs to 364 residues: Histidinol-phosphate aminotransferase (364 aa).

Residues 1–46 (MQPRDLSDHSPYVPGRGVEEVARDRGLDPDDLIKLSSNENPHGPSP) are disordered. Residues 17 to 33 (GVEEVARDRGLDPDDLI) show a composition bias toward basic and acidic residues. Lysine 222 carries the post-translational modification N6-(pyridoxal phosphate)lysine.

The protein belongs to the class-II pyridoxal-phosphate-dependent aminotransferase family. Histidinol-phosphate aminotransferase subfamily. The cofactor is pyridoxal 5'-phosphate.

It carries out the reaction L-histidinol phosphate + 2-oxoglutarate = 3-(imidazol-4-yl)-2-oxopropyl phosphate + L-glutamate. It participates in amino-acid biosynthesis; L-histidine biosynthesis; L-histidine from 5-phospho-alpha-D-ribose 1-diphosphate: step 7/9. This is Histidinol-phosphate aminotransferase from Halorubrum lacusprofundi (strain ATCC 49239 / DSM 5036 / JCM 8891 / ACAM 34).